A 991-amino-acid chain; its full sequence is Pentatricopeptide repeat-containing protein At1g73710 (991 aa).

2 disordered regions span residues 1–27 and 61–81; these read MLQP…HHHH and SSSS…RKRK. Residues 15–27 show a composition bias toward basic residues; the sequence is VRHHHHHHHHHHH. Positions 61 to 73 are enriched in low complexity; it reads SSSSVSPPRCSKP. PPR repeat units lie at residues 144–178, 179–213, 214–248, 304–338, 339–373, 374–408, 409–443, 444–474, 478–513, 514–548, 549–583, 584–618, 619–653, 654–688, 689–719, 723–757, 758–792, 862–896, and 897–931; these read NVIH…GVLP, TNNT…MHFP, DEVT…KVDL, LTST…GVPI, DTVT…GISP, DTKT…GLFP, DTVT…SIRI, DEHS…FQLD, SSTT…GQRN, DVLE…GTWP, DECT…GCKP, GCKT…GVKP, NEVV…GVQS, NHIV…EGGP, DVAA…LREK, DVIS…GLLS, DCTS…RKLL, EHFA…GLEP, and DIVT…ELEP. Residues 965–974 are compositionally biased toward basic and acidic residues; sequence AERECSSRSG. The interval 965 to 991 is disordered; that stretch reads AERECSSRSGEEEEDDEEENSEEDEAF. Over residues 975 to 991 the composition is skewed to acidic residues; the sequence is EEEEDDEEENSEEDEAF.

This sequence belongs to the PPR family. P subfamily.

The polypeptide is Pentatricopeptide repeat-containing protein At1g73710 (Arabidopsis thaliana (Mouse-ear cress)).